We begin with the raw amino-acid sequence, 105 residues long: Large ribosomal subunit protein eL33 (105 aa).

It belongs to the eukaryotic ribosomal protein eL33 family.

In terms of biological role, the protein was found to bind to both initiator and elongator tRNAs and consequently was assigned to the P site or P and A site. This is Large ribosomal subunit protein eL33 (rpl35a) from Dictyostelium discoideum (Social amoeba).